The primary structure comprises 89 residues: Bombyxin B-1 (89 aa).

An N-terminal signal peptide occupies residues 1–19; the sequence is MKTSVMFMLVIVISLMCSG. Intrachain disulfides connect Cys29–Cys75, Cys41–Cys88, and Cys74–Cys79. The propeptide at 48 to 66 is c peptide like; that stretch reads GGAQYAPYFWTRQYLGSRG.

Belongs to the insulin family. In terms of assembly, heterodimer of a B chain and an A chain linked by two disulfide bonds.

It localises to the secreted. Its function is as follows. Brain peptide responsible for activation of prothoracic glands to produce ecdysone in insects. The polypeptide is Bombyxin B-1 (BBXB1) (Bombyx mori (Silk moth)).